The following is a 565-amino-acid chain: MSWWSSTPSIDEQVEKATSESLPSGESDLALNLEICDLIRSKTVPAKDAMRSLKRRLLNRNPNVQLAALQLTDVCIKNGGSHFLVEIASREFVDPLMAIARNDDANPEVRQRVLQLLQQWAVAFAGQLQLQQVENAVTQLKSEGVSFPSASHDNAAVTSTFIDTKAPPEWIDSDVCMESGVAFSFLNRKHHCRNCGGVFTQACCQNYITLPHFGINVPVRVCNGCFKNLKKGKSDAPIHKPVPGATTTAPSSAPPANSAPNDDEDDIQKAIRLSLQEQESYKPPPPAAATSNDDDEDMKAAIAASLRDMENERQTGQTSASAGGLSSASTTVMAPSLTDLTATEESNINLLSLLVERLKGEPQGTILREPKIQELYDTVGNLRPKLARTMGETISKYDSLVDMHAKMTTVIRYYDALLEEKLNQAYTNRQSGGYAPQPHLSHQMTGQPPHLAPHLTGQITGQPHMGYQHTGQAPYLTGQVTGQAPYLSNQPTGHLTNHYTGSAPSAPQYGGPPAQNVYNAPSYQYSGAPEYDYASSPSAPSAPGGPSAPSAPAQPKEESAPLIEL.

A compositionally biased stretch (polar residues) spans 1 to 10; that stretch reads MSWWSSTPSI. Residues 1-24 form a disordered region; sequence MSWWSSTPSIDEQVEKATSESLPS. Positions 19–148 constitute a VHS domain; sequence SESLPSGESD…QLKSEGVSFP (130 aa). The segment at 170–230 adopts an FYVE-type; degenerate zinc-finger fold; the sequence is WIDSDVCMES…VCNGCFKNLK (61 aa). 4 residues coordinate Zn(2+): cysteine 192, cysteine 195, cysteine 222, and cysteine 225. Disordered stretches follow at residues 233–296, 309–328, and 429–565; these read KSDA…DDDE, MENE…LSSA, and RQSG…LIEL. Residues 245–260 show a composition bias toward low complexity; sequence ATTTAPSSAPPANSAP. UIM domains follow at residues 262 to 281 and 293 to 312; these read DDED…QESY and DDDE…MENE. The segment covering 315-328 has biased composition (low complexity); that stretch reads TGQTSASAGGLSSA. Composition is skewed to polar residues over residues 478-505 and 516-525; these read GQVT…SAPS and NVYNAPSYQY. Low complexity predominate over residues 534 to 553; the sequence is ASSPSAPSAPGGPSAPSAPA.

This sequence belongs to the VPS27 family. In terms of assembly, component of the ESCRT-0 complex composed of HSE1 and VPS27.

The protein localises to the endosome membrane. Its function is as follows. Component of the ESCRT-0 complex which is the sorting receptor for ubiquitinated cargo proteins at the multivesicular body (MVB) and recruits ESCRT-I to the MVB outer membrane. The chain is Vacuolar protein sorting-associated protein 27 (VPS27) from Yarrowia lipolytica (strain CLIB 122 / E 150) (Yeast).